Consider the following 299-residue polypeptide: Oxygen-dependent coproporphyrinogen-III oxidase (299 aa).

Residue serine 92 coordinates substrate. The a divalent metal cation site is built by histidine 96 and histidine 106. Histidine 106 (proton donor) is an active-site residue. A substrate-binding site is contributed by 108–110; the sequence is NVR. Residues histidine 145 and histidine 175 each contribute to the a divalent metal cation site. Positions 240-275 are important for dimerization; that stretch reads YVEFNLVWDRGTLFGLQTGGRTESILMSMPPLVRWE. Residue 258–260 participates in substrate binding; sequence GGR.

This sequence belongs to the aerobic coproporphyrinogen-III oxidase family. Homodimer. A divalent metal cation is required as a cofactor.

The protein localises to the cytoplasm. It catalyses the reaction coproporphyrinogen III + O2 + 2 H(+) = protoporphyrinogen IX + 2 CO2 + 2 H2O. The protein operates within porphyrin-containing compound metabolism; protoporphyrin-IX biosynthesis; protoporphyrinogen-IX from coproporphyrinogen-III (O2 route): step 1/1. Functionally, involved in the heme biosynthesis. Catalyzes the aerobic oxidative decarboxylation of propionate groups of rings A and B of coproporphyrinogen-III to yield the vinyl groups in protoporphyrinogen-IX. This is Oxygen-dependent coproporphyrinogen-III oxidase from Enterobacter sp. (strain 638).